A 341-amino-acid chain; its full sequence is tRNA (cytidine(56)-2'-O)-methyltransferase (341 aa).

Residues Leu-79 and 104 to 108 each bind S-adenosyl-L-methionine; that span reads GAEKV. One can recognise an HD domain in the interval 187-294; sequence IIRHVETVYK…VAHADNLVSM (108 aa).

This sequence belongs to the aTrm56 family. As to quaternary structure, homodimer.

Its subcellular location is the cytoplasm. The enzyme catalyses cytidine(56) in tRNA + S-adenosyl-L-methionine = 2'-O-methylcytidine(56) in tRNA + S-adenosyl-L-homocysteine + H(+). Its function is as follows. Specifically catalyzes the AdoMet-dependent 2'-O-ribose methylation of cytidine at position 56 in tRNAs. The sequence is that of tRNA (cytidine(56)-2'-O)-methyltransferase from Picrophilus torridus (strain ATCC 700027 / DSM 9790 / JCM 10055 / NBRC 100828 / KAW 2/3).